Here is a 2238-residue protein sequence, read N- to C-terminus: Protein Ycf2 (2238 aa).

1579 to 1586 (GSIGTGRS) contacts ATP.

The protein belongs to the Ycf2 family.

The protein resides in the plastid. In terms of biological role, probable ATPase of unknown function. Its presence in a non-photosynthetic plant (Epifagus virginiana) and experiments in tobacco indicate that it has an essential function which is probably not related to photosynthesis. This is Protein Ycf2 from Cuscuta exaltata (Tall dodder).